The sequence spans 127 residues: Aspartate 1-decarboxylase (127 aa).

S25 (schiff-base intermediate with substrate; via pyruvic acid) is an active-site residue. S25 carries the post-translational modification Pyruvic acid (Ser). Residue T57 participates in substrate binding. Catalysis depends on Y58, which acts as the Proton donor. Position 73–75 (73–75 (GAA)) interacts with substrate.

Belongs to the PanD family. As to quaternary structure, heterooctamer of four alpha and four beta subunits. Requires pyruvate as cofactor. Post-translationally, is synthesized initially as an inactive proenzyme, which is activated by self-cleavage at a specific serine bond to produce a beta-subunit with a hydroxyl group at its C-terminus and an alpha-subunit with a pyruvoyl group at its N-terminus.

It is found in the cytoplasm. The enzyme catalyses L-aspartate + H(+) = beta-alanine + CO2. The protein operates within cofactor biosynthesis; (R)-pantothenate biosynthesis; beta-alanine from L-aspartate: step 1/1. Its function is as follows. Catalyzes the pyruvoyl-dependent decarboxylation of aspartate to produce beta-alanine. This is Aspartate 1-decarboxylase from Clostridium botulinum (strain ATCC 19397 / Type A).